The chain runs to 371 residues: Cytokine receptor-like factor 2 (371 aa).

Residues 1 to 22 form the signal peptide; that stretch reads MGRLVLLWGAAVFLLGGWMALG. The Extracellular portion of the chain corresponds to 23–231; the sequence is QGGAAEGVQI…PTPPKPKLSK (209 aa). N-linked (GlcNAc...) asparagine glycans are attached at residues Asn-47 and Asn-55. Cys-71 and Cys-84 form a disulfide bridge. Asn-101 and Asn-169 each carry an N-linked (GlcNAc...) asparagine glycan. The 94-residue stretch at 118–211 folds into the Fibronectin type-III domain; that stretch reads KPSSPKHVRF…DWSEVTCWQR (94 aa). A disulfide bridge connects residues Cys-180 and Cys-218. The WSXWS motif signature appears at 200–204; it reads PSDWS. The chain crosses the membrane as a helical span at residues 232 to 252; the sequence is FILISSLAILLMVSLLLLSLW. The Cytoplasmic portion of the chain corresponds to 253-371; it reads KLWRVKKFLI…VMNDRSYVAL (119 aa). The Box 1 motif motif lies at 261 to 269; sequence LIPSVPDPK. Basic and acidic residues predominate over residues 322–336; sequence ESPRMLDPQTEEKEA. The tract at residues 322 to 347 is disordered; the sequence is ESPRMLDPQTEEKEASGGSLQLPHQP.

Belongs to the type I cytokine receptor family. Type 5 subfamily. In terms of assembly, heterodimer of CRLF2 and IL7R. Expressed in heart, skeletal muscle, kidney and adult and fetal liver. Primarily expressed in dendrites and monocytes. Weakly expressed in T-cells.

It is found in the cell membrane. It localises to the secreted. In terms of biological role, receptor for thymic stromal lymphopoietin (TSLP). Forms a functional complex with TSLP and IL7R which is capable of stimulating cell proliferation through activation of STAT3 and STAT5. Also activates JAK2. Implicated in the development of the hematopoietic system. In Homo sapiens (Human), this protein is Cytokine receptor-like factor 2 (CRLF2).